We begin with the raw amino-acid sequence, 303 residues long: Sulfate adenylyltransferase subunit 2 (303 aa).

This sequence belongs to the PAPS reductase family. CysD subfamily. In terms of assembly, heterodimer composed of CysD, the smaller subunit, and CysN.

The enzyme catalyses sulfate + ATP + H(+) = adenosine 5'-phosphosulfate + diphosphate. It functions in the pathway sulfur metabolism; hydrogen sulfide biosynthesis; sulfite from sulfate: step 1/3. With CysN forms the ATP sulfurylase (ATPS) that catalyzes the adenylation of sulfate producing adenosine 5'-phosphosulfate (APS) and diphosphate, the first enzymatic step in sulfur assimilation pathway. APS synthesis involves the formation of a high-energy phosphoric-sulfuric acid anhydride bond driven by GTP hydrolysis by CysN coupled to ATP hydrolysis by CysD. The polypeptide is Sulfate adenylyltransferase subunit 2 (Bacteroides fragilis (strain YCH46)).